Here is a 104-residue protein sequence, read N- to C-terminus: L-rhamnose mutarotase (104 aa).

Tyr-18 provides a ligand contact to substrate. The Proton donor role is filled by His-22. Substrate-binding positions include Tyr-41 and Trp-76–Trp-77.

The protein belongs to the rhamnose mutarotase family. In terms of assembly, homodimer.

It localises to the cytoplasm. The catalysed reaction is alpha-L-rhamnose = beta-L-rhamnose. It functions in the pathway carbohydrate metabolism; L-rhamnose metabolism. Functionally, involved in the anomeric conversion of L-rhamnose. The chain is L-rhamnose mutarotase from Citrobacter koseri (strain ATCC BAA-895 / CDC 4225-83 / SGSC4696).